A 729-amino-acid chain; its full sequence is Polyribonucleotide nucleotidyltransferase (729 aa).

Residues Asp485 and Asp491 each coordinate Mg(2+). Positions 552-611 constitute a KH domain; that stretch reads PRITTMKVAEDKIRTIIGKGGATIKGLIESTGVSIDIDDSGVIQLFSPDKMALEEAQKQI. The S1 motif domain maps to 621–689; it reads GQTYQGKVSK…KQGRVKLEWK (69 aa). The segment at 710–729 is disordered; sequence TMEEQSEEINSGNKISEEEE.

It belongs to the polyribonucleotide nucleotidyltransferase family. As to quaternary structure, component of the RNA degradosome, which is a multiprotein complex involved in RNA processing and mRNA degradation. Mg(2+) is required as a cofactor.

The protein resides in the cytoplasm. It carries out the reaction RNA(n+1) + phosphate = RNA(n) + a ribonucleoside 5'-diphosphate. Involved in mRNA degradation. Catalyzes the phosphorolysis of single-stranded polyribonucleotides processively in the 3'- to 5'-direction. The sequence is that of Polyribonucleotide nucleotidyltransferase from Legionella pneumophila (strain Paris).